The primary structure comprises 247 residues: Probable chemoreceptor glutamine deamidase CheD (247 aa).

The tract at residues K204–A247 is disordered.

It belongs to the CheD family.

It carries out the reaction L-glutaminyl-[protein] + H2O = L-glutamyl-[protein] + NH4(+). In terms of biological role, probably deamidates glutamine residues to glutamate on methyl-accepting chemotaxis receptors (MCPs), playing an important role in chemotaxis. This is Probable chemoreceptor glutamine deamidase CheD from Burkholderia orbicola (strain MC0-3).